The sequence spans 523 residues: Cysteine-rich secretory protein LCCL domain-containing 1 (523 aa).

Positions 1-23 (MKYVVQEWLRITTLLFIAQAVSA) are cleaved as a signal peptide. An SCP domain is found at 66–206 (LDLHNKLRGQ…PKAVYLVCNY (141 aa)). A disordered region spans residues 246-298 (ERPYSPHEPEEETNEIERQRSKAQDATAQSRPRTHSPSGSTGSEDSEKNEVIS). Over residues 269-288 (QDATAQSRPRTHSPSGSTGS) the composition is skewed to polar residues. LCCL domains lie at 302–397 (MSQI…ANSF) and 403–505 (TVQA…PGKQ). 4 disulfide bridges follow: cysteine 308–cysteine 326, cysteine 330–cysteine 350, cysteine 409–cysteine 431, and cysteine 435–cysteine 458.

This sequence belongs to the CRISP family.

The protein resides in the secreted. The protein is Cysteine-rich secretory protein LCCL domain-containing 1 (CRISPLD1) of Gallus gallus (Chicken).